The following is a 1155-amino-acid chain: DNA-directed RNA polymerase subunit beta (1155 aa).

The protein belongs to the RNA polymerase beta chain family. The RNAP catalytic core consists of 2 alpha, 1 beta, 1 beta' and 1 omega subunit. When a sigma factor is associated with the core the holoenzyme is formed, which can initiate transcription.

The catalysed reaction is RNA(n) + a ribonucleoside 5'-triphosphate = RNA(n+1) + diphosphate. In terms of biological role, DNA-dependent RNA polymerase catalyzes the transcription of DNA into RNA using the four ribonucleoside triphosphates as substrates. The polypeptide is DNA-directed RNA polymerase subunit beta (Borrelia duttonii (strain Ly)).